The chain runs to 291 residues: N-acetylmannosamine kinase (291 aa).

ATP is bound by residues 5 to 12 (AIDIGGTK) and 132 to 139 (GVGGGVVS). Residues His156, Cys166, Cys168, and Cys173 each coordinate Zn(2+).

It belongs to the ROK (NagC/XylR) family. NanK subfamily. Homodimer.

It carries out the reaction an N-acyl-D-mannosamine + ATP = an N-acyl-D-mannosamine 6-phosphate + ADP + H(+). It participates in amino-sugar metabolism; N-acetylneuraminate degradation; D-fructose 6-phosphate from N-acetylneuraminate: step 2/5. Functionally, catalyzes the phosphorylation of N-acetylmannosamine (ManNAc) to ManNAc-6-P. This is N-acetylmannosamine kinase from Escherichia coli (strain ATCC 8739 / DSM 1576 / NBRC 3972 / NCIMB 8545 / WDCM 00012 / Crooks).